We begin with the raw amino-acid sequence, 316 residues long: uncharacterized protein (316 aa).

Topologically, residues 1 to 70 (SFAYSGNSES…NNDEIGIWNY (70 aa)) are cytoplasmic. A helical transmembrane segment spans residues 71–91 (ISVAEMGGVLLFLSYWIWTCL). A topological domain (lumenal) is located at residue His-92. Residues 93–113 (FSKIIFPAQKVICLYIFLFAL) form a helical membrane-spanning segment. Residues 114 to 170 (NQTLQECIEEYVFSSECIKYRQFYSVYEIIDFLRTNFYRLFVIYCALGFGITRTVPK) lie on the Cytoplasmic side of the membrane. The chain crosses the membrane as a helical span at residues 171–191 (YLMIKGISIVIALCSVYWISL). At 192–194 (YKD) the chain is on the lumenal side. A helical membrane pass occupies residues 195–215 (VYVVSEIFDMIQYEVSPAIWV). The Cytoplasmic portion of the chain corresponds to 216-245 (YSICHLLKQCTSVTTYENASKARFFRRMLN). The chain crosses the membrane as a helical span at residues 246–266 (AFIFIFCASPMLHYLSNIIFG). Residues 267 to 316 (NFDYRLSVIIGDLFTFMEKIAFPCYIMFPTHNEALAYNRNVAEEAQEKMI) lie on the Lumenal side of the membrane.

The protein belongs to the UPF0742 family.

The protein localises to the endoplasmic reticulum. It is found in the membrane. This is an uncharacterized protein from Schizosaccharomyces pombe (strain 972 / ATCC 24843) (Fission yeast).